We begin with the raw amino-acid sequence, 369 residues long: 3-dehydroquinate synthase (369 aa).

NAD(+) is bound by residues 75-80, 109-113, 133-134, Lys146, Lys155, and 173-176; these read DGEEHK, GVIGD, TT, and TLKT. Zn(2+) contacts are provided by Glu188, His251, and His268.

The protein belongs to the sugar phosphate cyclases superfamily. Dehydroquinate synthase family. It depends on Co(2+) as a cofactor. Zn(2+) serves as cofactor. The cofactor is NAD(+).

The protein resides in the cytoplasm. The enzyme catalyses 7-phospho-2-dehydro-3-deoxy-D-arabino-heptonate = 3-dehydroquinate + phosphate. It functions in the pathway metabolic intermediate biosynthesis; chorismate biosynthesis; chorismate from D-erythrose 4-phosphate and phosphoenolpyruvate: step 2/7. Catalyzes the conversion of 3-deoxy-D-arabino-heptulosonate 7-phosphate (DAHP) to dehydroquinate (DHQ). This chain is 3-dehydroquinate synthase, found in Legionella pneumophila subsp. pneumophila (strain Philadelphia 1 / ATCC 33152 / DSM 7513).